The chain runs to 632 residues: MTAEKALPLGNGKAAEEARESEAPGGGCSSGGAAPARHPRVKRDKAVHERGHWNNKVEFVLSVAGEIIGLGNVWRFPYLCYKNGGGAFLIPYVVFFICCGIPVFFLETALGQFTSEGGITCWRKVCPLFEGIGYATQVIEAHLNVYYIIILAWAIFYLSNCFTTELPWATCGHEWNTENCVEFQKLNVSNYSHVSLQNATSPVMEFWEHRVLAISDGIEHIGNLRWELALCLLAAWTICYFCIWKGTKSTGKVVYVTATFPYIMLLILLIRGVTLPGASEGIKFYLYPDLSRLSDPQVWVDAGTQIFFSYAICLGCLTALGSYNNYNNNCYRDCIMLCCLNSGTSFVAGFAIFSVLGFMAYEQGVPIAEVAESGPGLAFIAYPKAVTMMPLSPLWATLFFMMLIFLGLDSQFVCVESLVTAVVDMYPKVFRRGYRRELLILALSVISYFLGLVMLTEGGMYIFQLFDSYAASGMCLLFVAIFECICIGWVYGSNRFYDNIEDMIGYRPPSLIKWCWMIMTPGICAGIFIFFLIKYKPLKYNNIYTYPAWGYGIGWLMALSSMLCIPLWICITVWKTEGTLPEKLQKLTTPSTDLKMRGKLGVSPRMVTVNDCDAKLKSDGTIAAITEKETHF.

The tract at residues 1-41 is disordered; that stretch reads MTAEKALPLGNGKAAEEARESEAPGGGCSSGGAAPARHPRV. The Cytoplasmic portion of the chain corresponds to 1–58; it reads MTAEKALPLGNGKAAEEARESEAPGGGCSSGGAAPARHPRVKRDKAVHERGHWNNKVE. Residue Ser21 is modified to Phosphoserine. 3 helical membrane-spanning segments follow: residues 59-79, 87-106, and 131-151; these read FVLS…FPYL, AFLI…VFFL, and GIGY…IIIL. Over 152–225 the chain is Extracellular; that stretch reads AWAIFYLSNC…DGIEHIGNLR (74 aa). Asn187, Asn190, and Asn198 each carry an N-linked (GlcNAc...) asparagine glycan. Helical transmembrane passes span 226-244, 253-270, 306-323, 335-356, 389-408, 438-456, 473-493, 514-533, and 553-571; these read WELA…FCIW, VVYV…ILLI, IFFS…LGSY, IMLC…FSVL, MPLS…FLGL, LLIL…VMLT, GMCL…VYGS, WCWM…FFLI, and IGWL…WICI. At 572-632 the chain is on the cytoplasmic side; that stretch reads TVWKTEGTLP…AAITEKETHF (61 aa).

The protein belongs to the sodium:neurotransmitter symporter (SNF) (TC 2.A.22) family. SLC6A11 subfamily. As to expression, widespread distribution in the brain.

The protein localises to the cell membrane. It carries out the reaction 4-aminobutanoate(out) + chloride(out) + 2 Na(+)(out) = 4-aminobutanoate(in) + chloride(in) + 2 Na(+)(in). The catalysed reaction is taurine(out) + chloride(out) + 2 Na(+)(out) = taurine(in) + chloride(in) + 2 Na(+)(in). It catalyses the reaction beta-alanine(out) + chloride(out) + 2 Na(+)(out) = beta-alanine(in) + chloride(in) + 2 Na(+)(in). The enzyme catalyses hypotaurine(out) + chloride(out) + 2 Na(+)(out) = hypotaurine(in) + chloride(in) + 2 Na(+)(in). GABA transport is inhibited by SNAP-5114. Functionally, mediates sodium- and chloride-dependent transport of gamma-aminobutyric acid (GABA). Can also mediate transport of beta-alanine and to a lower extent that of taurine and hypotaurine. The sequence is that of Sodium- and chloride-dependent GABA transporter 3 (SLC6A11) from Homo sapiens (Human).